Reading from the N-terminus, the 353-residue chain is Aliphatic aldoxime dehydratase (353 aa).

Residue Ser219 coordinates an aliphatic aldoxime. His299 provides a ligand contact to heme b. Residue His320 coordinates an aliphatic aldoxime. The active site involves His320.

It belongs to the heme-containing dehydratase family. As to quaternary structure, homodimer. Heme b is required as a cofactor.

It carries out the reaction an aliphatic aldoxime = a nitrile + H2O. Its activity is regulated as follows. Active when the heme iron is in the ferrous state. The activity is enhanced by reducing agents, such as Na(2)S, Na(2)S(2)(O4), 2-mercaptoethanol, and L-cysteine and supplementary additions of electron acceptors such as flavins, sulfite ion, and vitamin K3. The effect of various chemicals on the enzyme activity is different in the presence and absence of the reducing reagent, Na(2)S, which acts not only as a reductant but also changes the substrate specificity of the enzyme. Functionally, catalyzes the dehydration of aldoximes to their corresponding nitrile. Is active toward various arylalkyl- and alkyl-aldoximes, and to a lesser extent toward aryl-aldoximes. The sequence is that of Aliphatic aldoxime dehydratase from Rhodococcus erythropolis (Arthrobacter picolinophilus).